The primary structure comprises 854 residues: Envelope glycoprotein gp160 (854 aa).

The signal sequence occupies residues 1-20 (MGRLLIKILIIAIGISIGIG). The Extracellular segment spans residues 21-705 (NLYVTVFYGI…IILGLRFAWV (685 aa)). An N-linked (GlcNAc...) asparagine; by host glycan is attached at asparagine 35. An intrachain disulfide couples cysteine 42 to cysteine 55. Asparagine 68, asparagine 115, asparagine 136, asparagine 153, asparagine 168, asparagine 182, and asparagine 199 each carry an N-linked (GlcNAc...) asparagine; by host glycan. Cystine bridges form between cysteine 99–cysteine 207, cysteine 106–cysteine 198, cysteine 111–cysteine 154, cysteine 220–cysteine 250, and cysteine 230–cysteine 242. Residues 111–153 (CVELNGTATTKATTTATTTMTTPCQNCSTEQIEGEMAEEPASN) form a V1 region. Residues 154 to 198 (CTFAIAGYQRDVKKNYSMTWYDQELVCNNKTGSEKGSKDCYMIHC) form a V2 region. Asparagine 244, asparagine 255, asparagine 265, asparagine 271, asparagine 283, asparagine 295, asparagine 305, asparagine 355, asparagine 400, asparagine 409, asparagine 458, asparagine 472, and asparagine 478 each carry an N-linked (GlcNAc...) asparagine; by host glycan. The segment at 300–332 (CRRPGNKTVLPVTIMAGLVFHSQKYNTRLKQAW) is V3. A disulfide bond links cysteine 300 and cysteine 333. Disulfide bonds link cysteine 382/cysteine 457 and cysteine 389/cysteine 430. Residues 389–430 (CKMDWFINYLNNRTEDAEGTNRTCDKGKPGPGPCVQRTYVAC) are V4. Residues 473-481 (KSGPINVTL) form a V5 region. The segment at 523–543 (VPFVLGFLGFLGAAGTAMGAA) is fusion peptide. An immunosuppression region spans residues 586 to 602 (LNARVTALEKYLEDQAR). Asparagine 630 and asparagine 646 each carry an N-linked (GlcNAc...) asparagine; by host glycan. Residues 633–672 (WLEWERQINALEGNITQLLEEAQNQESKNLDLYQKLDDWS) are a coiled coil. Positions 667-688 (KLDDWSGFWSWFSLSTWLGYVK) are MPER; binding to GalCer. Residues 706–726 (LWGCIRNIRQGYNPLPQIHIH) traverse the membrane as a helical segment. The YXXL motif; contains endocytosis signal motif lies at 717–720 (YNPL). Topologically, residues 727-854 (SSAERPDNGG…VRQGLEKVLG (128 aa)) are cytoplasmic.

The mature envelope protein (Env) consists of a homotrimer of non-covalently associated gp120-gp41 heterodimers. The resulting complex protrudes from the virus surface as a spike. Interacts with host CD4 and CCR5. Gp120 also interacts with the C-type lectins CD209/DC-SIGN and CLEC4M/DC-SIGNR (collectively referred to as DC-SIGN(R)). In terms of assembly, the mature envelope protein (Env) consists of a homotrimer of non-covalently associated gp120-gp41 heterodimers. The resulting complex protrudes from the virus surface as a spike. Post-translationally, specific enzymatic cleavages in vivo yield mature proteins. Envelope glycoproteins are synthesized as an inactive precursor that is heavily N-glycosylated and processed likely by host cell furin in the Golgi to yield the mature SU and TM proteins. The cleavage site between SU and TM requires the minimal sequence [KR]-X-[KR]-R.

It is found in the virion membrane. Its subcellular location is the host cell membrane. It localises to the host endosome membrane. The surface protein gp120 (SU) attaches the virus to the host lymphoid cell by binding to the primary receptor CD4. This interaction induces a structural rearrangement creating a high affinity binding site for a chemokine coreceptor like CCR5. This peculiar 2 stage receptor-interaction strategy allows gp120 to maintain the highly conserved coreceptor-binding site in a cryptic conformation, protected from neutralizing antibodies. These changes are transmitted to the transmembrane protein gp41 and are thought to activate its fusogenic potential by unmasking its fusion peptide. Functionally, surface protein gp120 (SU) may target the virus to gut-associated lymphoid tissue (GALT) by binding host ITGA4/ITGB7 (alpha-4/beta-7 integrins), a complex that mediates T-cell migration to the GALT. Interaction between gp120 and ITGA4/ITGB7 would allow the virus to enter GALT early in the infection, infecting and killing most of GALT's resting CD4+ T-cells. This T-cell depletion is believed to be the major insult to the host immune system leading to AIDS. Its function is as follows. The surface protein gp120 is a ligand for CD209/DC-SIGN and CLEC4M/DC-SIGNR, which are respectively found on dendritic cells (DCs), and on endothelial cells of liver sinusoids and lymph node sinuses. These interactions allow capture of viral particles at mucosal surfaces by these cells and subsequent transmission to permissive cells. DCs are professional antigen presenting cells, critical for host immunity by inducing specific immune responses against a broad variety of pathogens. They act as sentinels in various tissues where they take up antigen, process it, and present it to T-cells following migration to lymphoid organs. SIV subverts the migration properties of dendritic cells to gain access to CD4+ T-cells in lymph nodes. Virus transmission to permissive T-cells occurs either in trans (without DCs infection, through viral capture and transmission), or in cis (following DCs productive infection, through the usual CD4-gp120 interaction), thereby inducing a robust infection. In trans infection, bound virions remain infectious over days and it is proposed that they are not degraded, but protected in non-lysosomal acidic organelles within the DCs close to the cell membrane thus contributing to the viral infectious potential during DCs' migration from the periphery to the lymphoid tissues. On arrival at lymphoid tissues, intact virions recycle back to DCs' cell surface allowing virus transmission to CD4+ T-cells. Virion capture also seems to lead to MHC-II-restricted viral antigen presentation, and probably to the activation of SIV-specific CD4+ cells. In terms of biological role, the transmembrane protein gp41 (TM) acts as a class I viral fusion protein. Under the current model, the protein has at least 3 conformational states: pre-fusion native state, pre-hairpin intermediate state, and post-fusion hairpin state. During fusion of viral and target intracellular membranes, the coiled coil regions (heptad repeats) assume a trimer-of-hairpins structure, positioning the fusion peptide in close proximity to the C-terminal region of the ectodomain. The formation of this structure appears to drive apposition and subsequent fusion of viral and target cell membranes. Complete fusion occurs in host cell endosomes. The virus undergoes clathrin-dependent internalization long before endosomal fusion, thus minimizing the surface exposure of conserved viral epitopes during fusion and reducing the efficacy of inhibitors targeting these epitopes. Membranes fusion leads to delivery of the nucleocapsid into the cytoplasm. The envelope glycoprotein gp160 precursor down-modulates cell surface CD4 antigen by interacting with it in the endoplasmic reticulum and blocking its transport to the cell surface. Functionally, the gp120-gp41 heterodimer allows rapid transcytosis of the virus through CD4 negative cells such as simple epithelial monolayers of the intestinal, rectal and endocervical epithelial barriers. Both gp120 and gp41 specifically recognize glycosphingolipids galactosyl-ceramide (GalCer) or 3' sulfo-galactosyl-ceramide (GalS) present in the lipid rafts structures of epithelial cells. Binding to these alternative receptors allows the rapid transcytosis of the virus through the epithelial cells. This transcytotic vesicle-mediated transport of virions from the apical side to the basolateral side of the epithelial cells does not involve infection of the cells themselves. This Cercopithecidae (Old World monkeys) protein is Envelope glycoprotein gp160 (env).